The following is a 286-amino-acid chain: 3-hydroxyanthranilate 3,4-dioxygenase (286 aa).

The domain A (catalytic) stretch occupies residues 1–160 (MERPVRVKAW…SEQYRTGKPN (160 aa)). R43 lines the O2 pocket. The Fe cation site is built by H47, E53, and H91. E53 is a substrate binding site. 2 residues coordinate substrate: R95 and E105. Positions 161–177 (PDQLLKEPPFPLSTRSV) are linker. Residues 178 to 286 (MEPMCLEAWL…QDPACKKSLG (109 aa)) are domain B.

Belongs to the 3-HAO family. In terms of assembly, monomer. Requires Fe(2+) as cofactor.

The protein localises to the cytoplasm. It localises to the cytosol. It carries out the reaction 3-hydroxyanthranilate + O2 = (2Z,4Z)-2-amino-3-carboxymuconate 6-semialdehyde. The protein operates within cofactor biosynthesis; NAD(+) biosynthesis; quinolinate from L-kynurenine: step 3/3. Functionally, catalyzes the oxidative ring opening of 3-hydroxyanthranilate to 2-amino-3-carboxymuconate semialdehyde, which spontaneously cyclizes to quinolinate. The protein is 3-hydroxyanthranilate 3,4-dioxygenase of Bos taurus (Bovine).